The chain runs to 494 residues: NADH-quinone oxidoreductase subunit N (494 aa).

Transmembrane regions (helical) follow at residues 9–29 (VIPE…DLFL), 36–56 (LTYV…LSDF), 73–93 (PMSN…LVYS), 107–127 (LGGE…VMMS), 131–151 (FLII…LVAF), 166–186 (FVLG…LYGA), 209–229 (LIFG…AVPF), 241–261 (PTAV…AITI), 278–298 (MLTI…IMQT), 304–324 (LAYS…SGVV), 339–359 (MFYV…IMLL), 382–402 (FAFV…VVGF), 416–436 (GQIW…FYYL), and 469–489 (ALLA…AAII).

The protein belongs to the complex I subunit 2 family. In terms of assembly, NDH-1 is composed of 14 different subunits. Subunits NuoA, H, J, K, L, M, N constitute the membrane sector of the complex.

Its subcellular location is the cell inner membrane. The catalysed reaction is a quinone + NADH + 5 H(+)(in) = a quinol + NAD(+) + 4 H(+)(out). In terms of biological role, NDH-1 shuttles electrons from NADH, via FMN and iron-sulfur (Fe-S) centers, to quinones in the respiratory chain. The immediate electron acceptor for the enzyme in this species is believed to be ubiquinone. Couples the redox reaction to proton translocation (for every two electrons transferred, four hydrogen ions are translocated across the cytoplasmic membrane), and thus conserves the redox energy in a proton gradient. The protein is NADH-quinone oxidoreductase subunit N of Herminiimonas arsenicoxydans.